The chain runs to 622 residues: Low affinity potassium transport system protein Kup (622 aa).

The next 12 helical transmembrane spans lie at 9-29 (LSAV…TSPL), 46-66 (PDVV…VVSV), 101-121 (ILVV…VITP), 137-157 (PALD…LFVI), 165-185 (VGKL…LLGL), 213-233 (VSFF…ALYA), 247-267 (WFTV…ALLL), 276-296 (PFFL…ATLA), 337-357 (IYIP…IIGF), 363-383 (LAAA…ILFC), 395-415 (FLVV…FSAN), and 416-436 (VLKL…MFII).

It belongs to the HAK/KUP transporter (TC 2.A.72) family.

It localises to the cell inner membrane. The enzyme catalyses K(+)(in) + H(+)(in) = K(+)(out) + H(+)(out). In terms of biological role, responsible for the low-affinity transport of potassium into the cell. Likely operates as a K(+):H(+) symporter. The chain is Low affinity potassium transport system protein Kup from Yersinia pestis bv. Antiqua (strain Antiqua).